Here is a 104-residue protein sequence, read N- to C-terminus: uncharacterized protein (104 aa).

This is an uncharacterized protein from Galliformes (FAdV-1).